Consider the following 124-residue polypeptide: Ribonuclease P protein component (124 aa).

It belongs to the RnpA family. As to quaternary structure, consists of a catalytic RNA component (M1 or rnpB) and a protein subunit.

The catalysed reaction is Endonucleolytic cleavage of RNA, removing 5'-extranucleotides from tRNA precursor.. Its function is as follows. RNaseP catalyzes the removal of the 5'-leader sequence from pre-tRNA to produce the mature 5'-terminus. It can also cleave other RNA substrates such as 4.5S RNA. The protein component plays an auxiliary but essential role in vivo by binding to the 5'-leader sequence and broadening the substrate specificity of the ribozyme. This chain is Ribonuclease P protein component, found in Mycolicibacterium gilvum (strain PYR-GCK) (Mycobacterium gilvum (strain PYR-GCK)).